Reading from the N-terminus, the 442-residue chain is Histidinol dehydrogenase (442 aa).

Residues Y138, Q196, and N219 each contribute to the NAD(+) site. Substrate contacts are provided by S245, Q267, and H270. Zn(2+) contacts are provided by Q267 and H270. Residues E334 and H335 each act as proton acceptor in the active site. Substrate-binding residues include H335, D368, E422, and H427. Residue D368 coordinates Zn(2+). Zn(2+) is bound at residue H427.

The protein belongs to the histidinol dehydrogenase family. Homodimer. It depends on Zn(2+) as a cofactor.

It catalyses the reaction L-histidinol + 2 NAD(+) + H2O = L-histidine + 2 NADH + 3 H(+). Its pathway is amino-acid biosynthesis; L-histidine biosynthesis; L-histidine from 5-phospho-alpha-D-ribose 1-diphosphate: step 9/9. Its function is as follows. Catalyzes the sequential NAD-dependent oxidations of L-histidinol to L-histidinaldehyde and then to L-histidine. The protein is Histidinol dehydrogenase of Pectobacterium atrosepticum (strain SCRI 1043 / ATCC BAA-672) (Erwinia carotovora subsp. atroseptica).